We begin with the raw amino-acid sequence, 674 residues long: DNA ligase (674 aa).

NAD(+) is bound by residues 34-38 (DFEFD), 83-84 (SL), and glutamate 117. Residue lysine 119 is the N6-AMP-lysine intermediate of the active site. Positions 140, 184, 297, and 321 each coordinate NAD(+). Positions 415, 418, 433, and 439 each coordinate Zn(2+). The BRCT domain occupies 598-674 (LVNTNFEGQS…IDEDEFERML (77 aa)).

It belongs to the NAD-dependent DNA ligase family. LigA subfamily. Requires Mg(2+) as cofactor. Mn(2+) serves as cofactor.

The catalysed reaction is NAD(+) + (deoxyribonucleotide)n-3'-hydroxyl + 5'-phospho-(deoxyribonucleotide)m = (deoxyribonucleotide)n+m + AMP + beta-nicotinamide D-nucleotide.. Functionally, DNA ligase that catalyzes the formation of phosphodiester linkages between 5'-phosphoryl and 3'-hydroxyl groups in double-stranded DNA using NAD as a coenzyme and as the energy source for the reaction. It is essential for DNA replication and repair of damaged DNA. This chain is DNA ligase, found in Chlorobaculum parvum (strain DSM 263 / NCIMB 8327) (Chlorobium vibrioforme subsp. thiosulfatophilum).